Here is a 101-residue protein sequence, read N- to C-terminus: Ubiquitin-related modifier 1 homolog (101 aa).

The residue at position 101 (G101) is a 1-thioglycine. G101 is covalently cross-linked (Glycyl lysine isopeptide (Gly-Lys) (interchain with K-? in acceptor proteins)).

The protein belongs to the URM1 family. Interacts with cer. C-terminal thiocarboxylation occurs in 2 steps, it is first acyl-adenylated (-COAMP) via the hesA/moeB/thiF part of the MOCS3 homolog, then thiocarboxylated (-COSH) via the rhodanese domain of the MOCS3 homolog.

Its subcellular location is the cytoplasm. It participates in tRNA modification; 5-methoxycarbonylmethyl-2-thiouridine-tRNA biosynthesis. Its function is as follows. Acts as a sulfur carrier required for 2-thiolation of mcm(5)S(2)U at tRNA wobble positions of cytosolic tRNA(Lys), tRNA(Glu) and tRNA(Gln). Serves as sulfur donor in tRNA 2-thiolation reaction by being thiocarboxylated (-COSH) at its C-terminus by MOCS3. The sulfur is then transferred to tRNA to form 2-thiolation of mcm(5)S(2)U. Also acts as a ubiquitin-like protein (UBL) that is covalently conjugated via an isopeptide bond to lysine residues of target proteins such as Prx2/Jafrac1, Ciao1, Eip71CD and GILT1. The thiocarboxylated form serves as substrate for conjugation and oxidative stress specifically induces the formation of UBL-protein conjugates. This chain is Ubiquitin-related modifier 1 homolog, found in Drosophila sechellia (Fruit fly).